We begin with the raw amino-acid sequence, 237 residues long: Undecaprenyl-diphosphatase (237 aa).

7 helical membrane passes run 38-58 (QTAV…FDGI), 65-85 (WRII…GVLF), 92-112 (LFSS…ILMF), 126-146 (MSFL…FPGI), 166-186 (ALQY…ILGL), 191-211 (ITIL…YVLS), and 217-237 (GKIW…YLVG).

Belongs to the UppP family.

The protein resides in the cell inner membrane. The catalysed reaction is di-trans,octa-cis-undecaprenyl diphosphate + H2O = di-trans,octa-cis-undecaprenyl phosphate + phosphate + H(+). In terms of biological role, catalyzes the dephosphorylation of undecaprenyl diphosphate (UPP). Confers resistance to bacitracin. The chain is Undecaprenyl-diphosphatase from Thermotoga petrophila (strain ATCC BAA-488 / DSM 13995 / JCM 10881 / RKU-1).